A 409-amino-acid chain; its full sequence is Dual-specificity RNA methyltransferase RlmN (409 aa).

Glu121 functions as the Proton acceptor in the catalytic mechanism. The 250-residue stretch at 127–376 (EEGRGTLCIS…IRTPRGRDIL (250 aa)) folds into the Radical SAM core domain. A disulfide bond links Cys134 and Cys379. [4Fe-4S] cluster is bound by residues Cys141, Cys145, and Cys148. Residues 205-206 (GE), Ser237, 259-261 (SLH), and Asn336 contribute to the S-adenosyl-L-methionine site. Cys379 (S-methylcysteine intermediate) is an active-site residue.

The protein belongs to the radical SAM superfamily. RlmN family. The cofactor is [4Fe-4S] cluster.

It localises to the cytoplasm. It carries out the reaction adenosine(2503) in 23S rRNA + 2 reduced [2Fe-2S]-[ferredoxin] + 2 S-adenosyl-L-methionine = 2-methyladenosine(2503) in 23S rRNA + 5'-deoxyadenosine + L-methionine + 2 oxidized [2Fe-2S]-[ferredoxin] + S-adenosyl-L-homocysteine. The catalysed reaction is adenosine(37) in tRNA + 2 reduced [2Fe-2S]-[ferredoxin] + 2 S-adenosyl-L-methionine = 2-methyladenosine(37) in tRNA + 5'-deoxyadenosine + L-methionine + 2 oxidized [2Fe-2S]-[ferredoxin] + S-adenosyl-L-homocysteine. Functionally, specifically methylates position 2 of adenine 2503 in 23S rRNA and position 2 of adenine 37 in tRNAs. m2A2503 modification seems to play a crucial role in the proofreading step occurring at the peptidyl transferase center and thus would serve to optimize ribosomal fidelity. This Rhizobium etli (strain ATCC 51251 / DSM 11541 / JCM 21823 / NBRC 15573 / CFN 42) protein is Dual-specificity RNA methyltransferase RlmN.